A 123-amino-acid polypeptide reads, in one-letter code: Methicillin resistance regulatory protein MecI (123 aa).

A DNA-binding region (H-T-H motif) is located at residues Glu7 to Ser71. The segment at Glu74–Lys123 is important for dimerization.

The protein belongs to the BlaI transcriptional regulatory family. Monomer and homodimer. In terms of processing, upon exposure to beta-lactams, proteolytic cleavage at a single site impairs dimerization and abolishes repressor activity.

It is found in the cytoplasm. Transcriptional repressor that constitutively blocks the transcription of the gene for the penicillin-binding protein MecA. Binds DNA as a dimer. The polypeptide is Methicillin resistance regulatory protein MecI (mecI) (Staphylococcus aureus (strain Mu50 / ATCC 700699)).